The chain runs to 396 residues: Ribosomal RNA large subunit methyltransferase I (396 aa).

In terms of domain architecture, PUA spans 2–81 (SVRLVLAKGR…ESIDIAFFTR (80 aa)).

Belongs to the methyltransferase superfamily. RlmI family.

The protein localises to the cytoplasm. It carries out the reaction cytidine(1962) in 23S rRNA + S-adenosyl-L-methionine = 5-methylcytidine(1962) in 23S rRNA + S-adenosyl-L-homocysteine + H(+). Functionally, specifically methylates the cytosine at position 1962 (m5C1962) of 23S rRNA. This Escherichia coli O1:K1 / APEC protein is Ribosomal RNA large subunit methyltransferase I.